Consider the following 297-residue polypeptide: HTH-type transcriptional regulator ArgP (297 aa).

Residues 4-60 enclose the HTH lysR-type domain; that stretch reads PDYRTLQALDAVIRERGFERAAQKLCITQSAVSQRIKQLENMFGQPLLVRTVPPRPT. The segment at residues 21–40 is a DNA-binding region (H-T-H motif); that stretch reads FERAAQKLCITQSAVSQRIK.

It belongs to the LysR transcriptional regulatory family. As to quaternary structure, homodimer.

Functionally, controls the transcription of genes involved in arginine and lysine metabolism. This Salmonella typhi protein is HTH-type transcriptional regulator ArgP.